Consider the following 819-residue polypeptide: Plastid division protein CDP1, chloroplastic (819 aa).

Residues 1 to 76 (MPVAYTFPVL…NAAGGGIHVV (76 aa)) constitute a chloroplast transit peptide. Residues 77 to 572 (DNAPSRTSSL…NKIWDEWLSQ (496 aa)) lie on the Stromal side of the membrane. Residues 419 to 439 (EAEALEKLKQLESNSDSAVRN) adopt a coiled-coil conformation. The chain crosses the membrane as a helical span at residues 573-593 (SSLIGRVSVVALLGCTVFFSL). Residues 594–819 (KLSGIRSGRL…FCQSDIQIQK (226 aa)) lie on the Chloroplast intermembrane side of the membrane. Residues 762-782 (IAGEAAEIEALLEEAAELVDE) adopt a coiled-coil conformation.

As to quaternary structure, self-interacts. Interacts (via N-terminus) with ARC3 (via MORN domains). Binds (via N-terminus) to FTSZ2 proteins, FTSZ2-1 and FTSZ2-2. Recruited ARC3 to the middle of the plastid where subsequent complex made of CDP1/PARC6, ARC3 and FtsZ proteins can form; this complex enhances the dynamics of Z rings during chloroplast division. Interacts (via C-terminus) with PDV1 (via C-terminus). Interacts with MIND1. As to expression, exclusively expressed in young green tissues such as young cotyledons, shoot apex, emerging leaves and budding inflorescence.

It is found in the plastid. Its subcellular location is the chloroplast inner membrane. In terms of biological role, component of the plastid division machinery required for PDV1 localization to constriction sites. Involved in chloroplast division site placement. Required for the proper formation of FtsZ rings at the division site in nongreen plastids (e.g. etioplasts). Inhibits FtsZ assembly, functioning as an antagonistic regulator of FtsZ dynamics against ARC6, by recruiting ARC3 to the middle of the plastid to facilitate its interaction with FtsZ proteins. Required during stromule biogenesis in the leaf epidermis, especially in non-mesophyll cells plastids. The sequence is that of Plastid division protein CDP1, chloroplastic from Arabidopsis thaliana (Mouse-ear cress).